Here is a 118-residue protein sequence, read N- to C-terminus: Putative pterin-4-alpha-carbinolamine dehydratase (118 aa).

This sequence belongs to the pterin-4-alpha-carbinolamine dehydratase family.

The catalysed reaction is (4aS,6R)-4a-hydroxy-L-erythro-5,6,7,8-tetrahydrobiopterin = (6R)-L-erythro-6,7-dihydrobiopterin + H2O. This Xanthomonas campestris pv. campestris (strain B100) protein is Putative pterin-4-alpha-carbinolamine dehydratase.